Reading from the N-terminus, the 458-residue chain is MKSNFSKFKDFIKYKKVAVVGIGVSNRPLIKFLVKLGAKVTAFDKKHREKLGSISLELEEIGVDLVLGENYLDKLDGYDVIFKTPSMRIDRPEFVKAKEAGAYITSEMEEFIKYCPAKVFGITGSDGKTTTTTLVYEMLKKEDYRTWVGGNIGTPLFANIEEMKEDHMVVLELSSFQLMTMDVSPEISLITNLSPNHLDVHKDFEEYVWAKKNIFKYQSSNNLLVLNKDDDLTNEMENEALGDVLKFSLVEKVYNGACLSNNKLTIQGKEVCDSKDIKLKGRHNIANLLAAFCMINKYVSIDSMKYVATNFSGVEHRCEFIREVNGVKYYNDSIASSPSRTLAGLNSFEKPVILIAGGYDKKIPFEPLAEGGYDKIKILILMGDTKNKIKSAFEKVISYKKCEMEIVIVNSMEEAVKVADNMAEKGDIITLSPACASFDMYPNFEIRGNEFKNIVNRL.

124–130 serves as a coordination point for ATP; it reads GSDGKTT.

The protein belongs to the MurCDEF family.

The protein localises to the cytoplasm. It carries out the reaction UDP-N-acetyl-alpha-D-muramoyl-L-alanine + D-glutamate + ATP = UDP-N-acetyl-alpha-D-muramoyl-L-alanyl-D-glutamate + ADP + phosphate + H(+). Its pathway is cell wall biogenesis; peptidoglycan biosynthesis. In terms of biological role, cell wall formation. Catalyzes the addition of glutamate to the nucleotide precursor UDP-N-acetylmuramoyl-L-alanine (UMA). The chain is UDP-N-acetylmuramoylalanine--D-glutamate ligase from Clostridium botulinum (strain Kyoto / Type A2).